We begin with the raw amino-acid sequence, 509 residues long: Meiotically up-regulated gene 157 protein (509 aa).

The next 5 membrane-spanning stretches (helical) occupy residues 4 to 24 (WQAILFFLFGIAFANNLNIPW), 140 to 160 (LATLILGAIQTQAEMLIQFPY), 296 to 316 (ACVLQYFIPANAMMVVELSHL), 368 to 388 (ILFMDDANVPSLLSLPYLGFV), and 417 to 437 (ISGIGGPHIGLRNVWPMSLIV).

The protein resides in the endoplasmic reticulum membrane. Functionally, has a role in meiosis. The protein is Meiotically up-regulated gene 157 protein (mug157) of Schizosaccharomyces pombe (strain 972 / ATCC 24843) (Fission yeast).